The chain runs to 909 residues: Lon protease homolog 2, peroxisomal (909 aa).

The 230-residue stretch at 1 to 230 (MAPVRAPTAR…KVIELLDRQV (230 aa)) folds into the Lon N-terminal domain. The disordered stretch occupies residues 249–269 (FPMDPDSTKPGKVKPPVKAPG). 463–470 (GPPGVGKT) lines the ATP pocket. A Lon proteolytic domain is found at 706–893 (TSRPGIVTGL…WEAIRYVWPD (188 aa)). Residues S799 and K842 contribute to the active site. A Microbody targeting signal motif is present at residues 907–909 (SRL).

Belongs to the peptidase S16 family.

The protein localises to the peroxisome matrix. Its subcellular location is the cytoplasm. The enzyme catalyses Hydrolysis of proteins in presence of ATP.. In terms of biological role, ATP-dependent serine protease that mediates the selective degradation of misfolded and unassembled polypeptides in the peroxisomal matrix. Necessary for type 2 peroxisome targeting signal (PTS2)-containing protein processing and facilitates peroxisome matrix protein import. The protein is Lon protease homolog 2, peroxisomal of Sordaria macrospora (strain ATCC MYA-333 / DSM 997 / K(L3346) / K-hell).